Reading from the N-terminus, the 471-residue chain is Glutamate--tRNA ligase (471 aa).

Residues 9 to 19 carry the 'HIGH' region motif; sequence PSPTGYLHVGG. Residues Cys-98, Cys-100, Cys-125, and His-127 each coordinate Zn(2+). The short motif at 237–241 is the 'KMSKS' region element; it reads KLSKR. Lys-240 is an ATP binding site.

It belongs to the class-I aminoacyl-tRNA synthetase family. Glutamate--tRNA ligase type 1 subfamily. As to quaternary structure, monomer. The cofactor is Zn(2+).

Its subcellular location is the cytoplasm. It catalyses the reaction tRNA(Glu) + L-glutamate + ATP = L-glutamyl-tRNA(Glu) + AMP + diphosphate. Catalyzes the attachment of glutamate to tRNA(Glu) in a two-step reaction: glutamate is first activated by ATP to form Glu-AMP and then transferred to the acceptor end of tRNA(Glu). In Shigella boydii serotype 18 (strain CDC 3083-94 / BS512), this protein is Glutamate--tRNA ligase.